Consider the following 1071-residue polypeptide: Carbamoyl phosphate synthase large chain (1071 aa).

The interval 1–403 (MPKRTDLKSI…SFQKALRGLE (403 aa)) is carboxyphosphate synthetic domain. The 196-residue stretch at 133–328 (KEAMEKIGLS…IAKVAANWAV (196 aa)) folds into the ATP-grasp 1 domain. ATP contacts are provided by Arg-169, Gly-175, Gly-176, Gln-208, Val-210, Glu-215, Gly-241, Val-242, His-243, Gln-285, and Glu-299. Mg(2+) is bound by residues Gln-285, Glu-299, and Asn-301. Mn(2+) is bound by residues Gln-285, Glu-299, and Asn-301. The interval 404 to 548 (TGLCGFNPAR…YSTYEEECES (145 aa)) is oligomerization domain. Residues 549-930 (RPSDRKKVMI…AYYKAQLGAG (382 aa)) are carbamoyl phosphate synthetic domain. The region spanning 673–864 (QKVLNDLGLR…LAKVGARCMA (192 aa)) is the ATP-grasp 2 domain. The ATP site is built by Arg-709, Phe-748, Leu-750, Glu-755, Gly-780, Ile-781, His-782, Ser-783, Gln-823, and Glu-835. Mg(2+)-binding residues include Gln-823, Glu-835, and Asn-837. Mn(2+)-binding residues include Gln-823, Glu-835, and Asn-837. Residues 931–1071 (ERLNPTGKIF…ELHGRLKNRN (141 aa)) enclose the MGS-like domain. The tract at residues 931–1071 (ERLNPTGKIF…ELHGRLKNRN (141 aa)) is allosteric domain.

It belongs to the CarB family. Composed of two chains; the small (or glutamine) chain promotes the hydrolysis of glutamine to ammonia, which is used by the large (or ammonia) chain to synthesize carbamoyl phosphate. Tetramer of heterodimers (alpha,beta)4. Mg(2+) serves as cofactor. It depends on Mn(2+) as a cofactor.

The catalysed reaction is hydrogencarbonate + L-glutamine + 2 ATP + H2O = carbamoyl phosphate + L-glutamate + 2 ADP + phosphate + 2 H(+). The enzyme catalyses hydrogencarbonate + NH4(+) + 2 ATP = carbamoyl phosphate + 2 ADP + phosphate + 2 H(+). It functions in the pathway amino-acid biosynthesis; L-arginine biosynthesis; carbamoyl phosphate from bicarbonate: step 1/1. The protein operates within pyrimidine metabolism; UMP biosynthesis via de novo pathway; (S)-dihydroorotate from bicarbonate: step 1/3. Large subunit of the glutamine-dependent carbamoyl phosphate synthetase (CPSase). CPSase catalyzes the formation of carbamoyl phosphate from the ammonia moiety of glutamine, carbonate, and phosphate donated by ATP, constituting the first step of 2 biosynthetic pathways, one leading to arginine and/or urea and the other to pyrimidine nucleotides. The large subunit (synthetase) binds the substrates ammonia (free or transferred from glutamine from the small subunit), hydrogencarbonate and ATP and carries out an ATP-coupled ligase reaction, activating hydrogencarbonate by forming carboxy phosphate which reacts with ammonia to form carbamoyl phosphate. The protein is Carbamoyl phosphate synthase large chain of Neisseria gonorrhoeae.